Reading from the N-terminus, the 51-residue chain is Large ribosomal subunit protein eL39z/eL39x (51 aa).

Residues 1–21 (MPSHKSFMIKKKLGKKMRQNR) form a disordered region. The segment covering 7–19 (FMIKKKLGKKMRQ) has biased composition (basic residues).

Belongs to the eukaryotic ribosomal protein eL39 family.

The protein is Large ribosomal subunit protein eL39z/eL39x (RPL39A) of Arabidopsis thaliana (Mouse-ear cress).